The sequence spans 420 residues: Gamma-glutamyl phosphate reductase (420 aa).

Belongs to the gamma-glutamyl phosphate reductase family.

It is found in the cytoplasm. It catalyses the reaction L-glutamate 5-semialdehyde + phosphate + NADP(+) = L-glutamyl 5-phosphate + NADPH + H(+). It participates in amino-acid biosynthesis; L-proline biosynthesis; L-glutamate 5-semialdehyde from L-glutamate: step 2/2. In terms of biological role, catalyzes the NADPH-dependent reduction of L-glutamate 5-phosphate into L-glutamate 5-semialdehyde and phosphate. The product spontaneously undergoes cyclization to form 1-pyrroline-5-carboxylate. The polypeptide is Gamma-glutamyl phosphate reductase (Streptococcus pneumoniae serotype 19F (strain G54)).